Reading from the N-terminus, the 417-residue chain is Putative Bro-N domain-containing protein 289L (417 aa).

One can recognise a Bro-N domain in the interval 4-134 (LINLKDCKEY…VILPSIRKFG (131 aa)). The stretch at 152-193 (KDKSEQELQFQLKQEREEKENAYIKLRSETKRLKQQIKRTLE) forms a coiled coil.

This sequence belongs to the IIV-6 201R/289L family.

This chain is Putative Bro-N domain-containing protein 289L, found in Invertebrate iridescent virus 6 (IIV-6).